Consider the following 211-residue polypeptide: Small ribosomal subunit protein eS1 (211 aa).

The disordered stretch occupies residues 192–211 (NGLPPYEAVGDRATPELASY).

Belongs to the eukaryotic ribosomal protein eS1 family.

This is Small ribosomal subunit protein eS1 from Methanopyrus kandleri (strain AV19 / DSM 6324 / JCM 9639 / NBRC 100938).